Consider the following 246-residue polypeptide: UDP-N-acetyl-D-mannosaminuronic acid transferase (246 aa).

It belongs to the glycosyltransferase 26 family.

The catalysed reaction is UDP-N-acetyl-alpha-D-mannosaminouronate + N-acetyl-alpha-D-glucosaminyl-di-trans,octa-cis-undecaprenyl diphosphate = beta-D-ManNAcA-(1-&gt;4)-alpha-D-GlcNAc-di-trans,octa-cis-undecaprenyl diphosphate + UDP + H(+). The protein operates within bacterial outer membrane biogenesis; enterobacterial common antigen biosynthesis. Its function is as follows. Catalyzes the synthesis of Und-PP-GlcNAc-ManNAcA (Lipid II), the second lipid-linked intermediate involved in enterobacterial common antigen (ECA) synthesis. In Escherichia coli (strain K12), this protein is UDP-N-acetyl-D-mannosaminuronic acid transferase.